Here is a 443-residue protein sequence, read N- to C-terminus: Chromosomal replication initiator protein DnaA (443 aa).

Residues Met1–Phe67 are domain I, interacts with DnaA modulators. Residues Phe67 to Gly105 form a domain II region. A domain III, AAA+ region region spans residues Asn106 to Ala323. The ATP site is built by Gly151, Gly153, Lys154, and Thr155. The segment at Asn324–Glu443 is domain IV, binds dsDNA.

Belongs to the DnaA family. In terms of assembly, oligomerizes as a right-handed, spiral filament on DNA at oriC.

Its subcellular location is the cytoplasm. Functionally, plays an essential role in the initiation and regulation of chromosomal replication. ATP-DnaA binds to the origin of replication (oriC) to initiate formation of the DNA replication initiation complex once per cell cycle. Binds the DnaA box (a 9 base pair repeat at the origin) and separates the double-stranded (ds)DNA. Forms a right-handed helical filament on oriC DNA; dsDNA binds to the exterior of the filament while single-stranded (ss)DNA is stabiized in the filament's interior. The ATP-DnaA-oriC complex binds and stabilizes one strand of the AT-rich DNA unwinding element (DUE), permitting loading of DNA polymerase. After initiation quickly degrades to an ADP-DnaA complex that is not apt for DNA replication. Binds acidic phospholipids. The chain is Chromosomal replication initiator protein DnaA from Stenotrophomonas maltophilia (strain K279a).